The following is a 555-amino-acid chain: CTP synthase (555 aa).

The interval 1-265 (MTRYIFITGG…GNRVCEKLNI (265 aa)) is amidoligase domain. S13 is a CTP binding site. Residue S13 participates in UTP binding. Residues 14–19 (SLGKGI) and D71 contribute to the ATP site. D71 and E139 together coordinate Mg(2+). CTP is bound by residues 146–148 (DIE), 186–191 (KTKPTQ), and K222. UTP is bound by residues 186 to 191 (KTKPTQ) and K222. Residues 290-541 (TVAVVGKYVD…IKAGLAAKEA (252 aa)) form the Glutamine amidotransferase type-1 domain. G351 contacts L-glutamine. The active-site Nucleophile; for glutamine hydrolysis is the C378. L-glutamine contacts are provided by residues 379-382 (LGMQ), E402, and R469. Active-site residues include H514 and E516.

The protein belongs to the CTP synthase family. As to quaternary structure, homotetramer.

It catalyses the reaction UTP + L-glutamine + ATP + H2O = CTP + L-glutamate + ADP + phosphate + 2 H(+). The catalysed reaction is L-glutamine + H2O = L-glutamate + NH4(+). The enzyme catalyses UTP + NH4(+) + ATP = CTP + ADP + phosphate + 2 H(+). It participates in pyrimidine metabolism; CTP biosynthesis via de novo pathway; CTP from UDP: step 2/2. Allosterically activated by GTP, when glutamine is the substrate; GTP has no effect on the reaction when ammonia is the substrate. The allosteric effector GTP functions by stabilizing the protein conformation that binds the tetrahedral intermediate(s) formed during glutamine hydrolysis. Inhibited by the product CTP, via allosteric rather than competitive inhibition. Functionally, catalyzes the ATP-dependent amination of UTP to CTP with either L-glutamine or ammonia as the source of nitrogen. Regulates intracellular CTP levels through interactions with the four ribonucleotide triphosphates. In Coxiella burnetii (strain CbuG_Q212) (Coxiella burnetii (strain Q212)), this protein is CTP synthase.